Here is a 1287-residue protein sequence, read N- to C-terminus: FYVE zinc finger domain protein UPA1 (1287 aa).

Residues 1–298 (MTIPDPANII…SSTSLSAPAE (298 aa)) are disordered. Positions 86 to 99 (DSSSFGSKPSSSAS) are enriched in low complexity. A compositionally biased stretch (polar residues) spans 115 to 136 (WATSSTTSHPSKASQSTLSPNA). The PAM2 signature appears at 128 to 144 (SQSTLSPNASVFKPSRS). Composition is skewed to basic and acidic residues over residues 177–187 (RPDHAPLDHEQ) and 201–211 (KVEEQRGDHSI). The segment covering 212-235 (PHQNGLVSAQAQTASDAVSTSKYT) has biased composition (polar residues). A PAM2L 1 motif is present at residues 239–253 (ADQEEDQDDFVYPGA). Residues 255-294 (SPSSGQAAVQDEQQAVTDSQTTKSLTKQESDPEASSTSLS) show a composition bias toward polar residues. 4 ANK repeats span residues 366–395 (NGLV…AIVE), 400–429 (EGET…DANA), 433–463 (DGWT…QIDV), and 468–497 (GAWT…ADPF). Disordered stretches follow at residues 582 to 630 (NGGK…VGLP), 643 to 697 (RVGP…ASAQ), 934 to 960 (REAA…YPNS), and 977 to 1005 (TSGT…APSE). Positions 674-695 (STPTPESVLQARRGTSSVNGAS) are enriched in polar residues. The span at 938-955 (GLDEDEDEDAADDDDDEF) shows a compositional bias: acidic residues. A PAM2L 2 motif is present at residues 941-960 (EDEDEDAADDDDDEFIYPNS). The segment covering 981–995 (LSRPSLSQRQSSAAS) has biased composition (low complexity). Residues 1055-1129 (DEEAKDCIGC…VCNGCHAELQ (75 aa)) form an FYVE-type zinc finger. Zn(2+) contacts are provided by Cys-1061, Cys-1064, Cys-1077, Cys-1080, Cys-1085, Cys-1088, Cys-1121, and Cys-1124. The RING-type; atypical zinc finger occupies 1243 to 1283 (CSICMEDFVANSTIARLPCLCYFHRGCIDSWFKRGRECPVH).

It belongs to the UPA1 PAM2 domain-binding protein family. In terms of assembly, part of large ribonucleoprotein complexes (mRNPs) containing RNA-binding proteins RRM4 and PAB1, endosome-binding protein UPA1, core scaffold protein UPA2 and associated factor GRP1. Interacts (via PAM2 motif) with PAB1 (via PABC domain). Interacts (via PAM2L motifs) with RRM4.

It is found in the cytoplasm. Its subcellular location is the cytoskeleton. The protein resides in the endosome. Functionally, FYVE zinc finger domain protein that functions in endosomal targeting and transport of mRNAs, as well as associated ribosomes. The endosomal mRNA transport regulates polarity of the infectious hyphae by transporting a broad spectrum of cargo mRNAs from the nucleus to cell poles. Involved in chitinase CTS1 secretion. Dispensable for general endosomal functions but crucial for endosomal recruitment of RRM4. The sequence is that of FYVE zinc finger domain protein UPA1 from Mycosarcoma maydis (Corn smut fungus).